Here is a 1039-residue protein sequence, read N- to C-terminus: Translation initiation factor IF-2 (1039 aa).

Disordered regions lie at residues 39 to 347 and 400 to 452; these read TISE…KWQE and ARPP…PEKV. Positions 103–125 are enriched in polar residues; that stretch reads RNTTSNAPEASVANNQIASSEAN. The segment covering 157–176 has biased composition (low complexity); sequence PQKPAAPEAEPEAQSQAPAK. 2 stretches are compositionally biased toward basic and acidic residues: residues 178–197 and 226–243; these read AVEK…ERQP and PILK…DQAK. Over residues 408 to 423 the composition is skewed to low complexity; that stretch reads ARSASAATAAPISSPT. A compositionally biased stretch (basic and acidic residues) spans 432–451; sequence NNRDQNRRQETEVKRERPEK. Residues 533-706 enclose the tr-type G domain; the sequence is RRPPVVTIMG…LLVAEVGELS (174 aa). Residues 542–549 are G1; the sequence is GHVDHGKT. 542-549 is a binding site for GTP; the sequence is GHVDHGKT. Residues 567 to 571 are G2; that stretch reads GITQH. Residues 592–595 form a G3 region; it reads DTPG. GTP-binding positions include 592 to 596 and 646 to 649; these read DTPGH and NKID. Positions 646-649 are G4; the sequence is NKID. Residues 682–684 are G5; that stretch reads SAI.

This sequence belongs to the TRAFAC class translation factor GTPase superfamily. Classic translation factor GTPase family. IF-2 subfamily.

It is found in the cytoplasm. Functionally, one of the essential components for the initiation of protein synthesis. Protects formylmethionyl-tRNA from spontaneous hydrolysis and promotes its binding to the 30S ribosomal subunits. Also involved in the hydrolysis of GTP during the formation of the 70S ribosomal complex. The chain is Translation initiation factor IF-2 from Nostoc sp. (strain PCC 7120 / SAG 25.82 / UTEX 2576).